A 322-amino-acid polypeptide reads, in one-letter code: Interferon regulatory factor 1 (322 aa).

Positions 5–113 (RMRMRPWLEM…SAVRVYRMLP (109 aa)) form a DNA-binding region, IRF tryptophan pentad repeat. K78 carries the N6-acetyllysine modification. The interval 92–164 (EEVKDQSRNK…STLPDDHSNY (73 aa)) is disordered. Polar residues predominate over residues 146-157 (DTFSDGLSSSTL). Residues K276 and K296 each participate in a glycyl lysine isopeptide (Lys-Gly) (interchain with G-Cter in SUMO) cross-link.

Belongs to the IRF family. Monomer. Homodimer. Interacts with EP300. Interacts with MYD88. Interacts with PIAS3. Interacts with SPOP. Phosphorylated by CK2 and this positively regulates its activity. In terms of processing, sumoylation represses the transcriptional activity and displays enhanced resistance to protein degradation. Sumoylated by UBE2I/UBC9 and SUMO1. Inactivates the tumor suppressor activity. Elevated levels in tumor cells. Major site is Lys-276. Sumoylation is enhanced by PIAS3. Desumoylated by SENP1 in tumor cells and appears to compete with ubiquitination on C-terminal sites. Post-translationally, ubiquitinated in a SPOP-depedent manner. Appears to compete with sumoylation on C-terminal sites.

It is found in the nucleus. The protein localises to the cytoplasm. With respect to regulation, activated by MYD88. Its function is as follows. Transcriptional regulator which displays a remarkable functional diversity in the regulation of cellular responses. Regulates transcription of IFN and IFN-inducible genes, host response to viral and bacterial infections, regulation of many genes expressed during hematopoiesis, inflammation, immune responses and cell proliferation and differentiation, regulation of the cell cycle and induction of growth arrest and programmed cell death following DNA damage. Stimulates both innate and acquired immune responses through the activation of specific target genes and can act as a transcriptional activator and repressor regulating target genes by binding to an interferon-stimulated response element (ISRE) in their promoters. Has an essentail role in IFNG-dependent immunity to mycobacteria. Binds to a consensus sequence in gene promoters. Its target genes for transcriptional activation activity include: genes involved in anti-viral response, such as IFN-alpha/beta, RIGI, TNFSF10/TRAIL, ZBP1, OAS1/2, PIAS1/GBP, EIF2AK2/PKR and RSAD2/viperin; antibacterial response, such as GBP2, GBP5 and NOS2/INOS; anti-proliferative response, such as p53/TP53, LOX and CDKN1A; apoptosis, such as BBC3/PUMA, CASP1, CASP7 and CASP8; immune response, such as IL7, IL12A/B and IL15, PTGS2/COX2 and CYBB; DNA damage responses and DNA repair, such as POLQ/POLH; MHC class I expression, such as TAP1, PSMB9/LMP2, PSME1/PA28A, PSME2/PA28B and B2M and MHC class II expression, such as CIITA; metabolic enzymes, such as ACOD1/IRG1. Represses genes involved in anti-proliferative response, such as BIRC5/survivin, CCNB1, CCNE1, CDK1, CDK2 and CDK4 and in immune response, such as FOXP3, IL4, ANXA2 and TLR4. Stimulates p53/TP53-dependent transcription through enhanced recruitment of EP300 leading to increased acetylation of p53/TP53. Plays an important role in immune response directly affecting NK maturation and activity, macrophage production of IL12, Th1 development and maturation of CD8+ T-cells. Also implicated in the differentiation and maturation of dendritic cells and in the suppression of regulatory T (Treg) cells development. Acts as a tumor suppressor and plays a role not only in antagonism of tumor cell growth but also in stimulating an immune response against tumor cells. In Bos taurus (Bovine), this protein is Interferon regulatory factor 1 (IRF1).